Reading from the N-terminus, the 78-residue chain is Large ribosomal subunit protein bL28 (78 aa).

Residues Met1–His20 are disordered.

This sequence belongs to the bacterial ribosomal protein bL28 family.

In Pseudomonas putida (strain ATCC 700007 / DSM 6899 / JCM 31910 / BCRC 17059 / LMG 24140 / F1), this protein is Large ribosomal subunit protein bL28.